We begin with the raw amino-acid sequence, 764 residues long: Palmitoyltransferase AKR1 (764 aa).

Disordered stretches follow at residues 1–38 (MVNELENVPRASTLTNEEQTVDPSNNDSQEDISLGDSN) and 51–71 (SGNEEESGNEQVNHNDEAEED). Residues 1–321 (MVNELENVPR…IKKWFKKSQH (321 aa)) lie on the Cytoplasmic side of the membrane. Positions 10–27 (RASTLTNEEQTVDPSNND) are enriched in polar residues. A phosphoserine mark is found at serine 51 and serine 57. ANK repeat units lie at residues 72-102 (PLLTRYHTACQRGDLATVKEMIHGKLLEVNN), 108-137 (EHITGLHWASINNRLSVVDFLVSQGADVNA), 142-171 (LHATPLHWAARYGYVYIVDFLLKHGADPTM), 175-204 (QGFNLLHLSVNSSNIMLVLYVLFNVVSKGL), 213-242 (KGRTSLLWAAYQGDSLTVAELLKFGASIKI), and 246-275 (EGFTPLHWGTVKGQPHVLKYLIQDGADFFQ). A helical transmembrane segment spans residues 322–341 (AKLVTFITPFLFLGIAFALF). Residues 342–346 (SHINP) are Lumenal-facing. The helical transmembrane segment at 347 to 364 (LFVIIVLFLLAIATNKGL) threads the bilayer. The Cytoplasmic portion of the chain corresponds to 365–384 (NKFVLPSYGRMGVHNVTLLR). A helical transmembrane segment spans residues 385–405 (SPLLSGVFFGTLLWVTIVWFF). The Lumenal portion of the chain corresponds to 406-418 (KVMPRTFSDEQYT). Residues 419 to 439 (NILMLVILVSVFYLFGQLVIM) traverse the membrane as a helical segment. The Cytoplasmic segment spans residues 440 to 513 (DPGCLPEETD…FNDVGLKNHK (74 aa)). The 51-residue stretch at 470 to 520 (NFCIETWIRKPLRSKFSPLNNAVVARFDHYCPWIFNDVGLKNHKAFIFFIT) folds into the DHHC domain. Cysteine 500 functions as the S-palmitoyl cysteine intermediate in the catalytic mechanism. Residues 514-534 (AFIFFITLMESGIFTFLALCL) traverse the membrane as a helical segment. The Lumenal segment spans residues 535–570 (EYFDELEDAHEDTSQKNGKCFILGASDLCSGLIYDR). Residues 571 to 591 (FVFLILLWALLQSIWVASLIF) traverse the membrane as a helical segment. The Cytoplasmic portion of the chain corresponds to 592–764 (VQAFQICKGM…KDVEQGNDMV (173 aa)).

The protein belongs to the DHHC palmitoyltransferase family. AKR/ZDHHC17 subfamily.

Its subcellular location is the early endosome membrane. It is found in the golgi apparatus membrane. It carries out the reaction L-cysteinyl-[protein] + hexadecanoyl-CoA = S-hexadecanoyl-L-cysteinyl-[protein] + CoA. Palmitoyltransferase specific for casein kinase 1. Palmitoylates isoforms YCK1 and YCK2 at both C-terminal cysteine residues, which is required for their proper plasma membrane localization. Required for constitutive endocytosis of a-factor receptor STE3 and both constitutive and pheromone-induced endocytosis of alpha-factor receptor STE2. The polypeptide is Palmitoyltransferase AKR1 (AKR1) (Saccharomyces cerevisiae (strain ATCC 204508 / S288c) (Baker's yeast)).